We begin with the raw amino-acid sequence, 193 residues long: Orotate phosphoribosyltransferase (193 aa).

Residue 114 to 122 (EDVITTGGS) coordinates 5-phospho-alpha-D-ribose 1-diphosphate. Orotate contacts are provided by Thr118 and Arg146.

It belongs to the purine/pyrimidine phosphoribosyltransferase family. PyrE subfamily. Homodimer. Mg(2+) is required as a cofactor.

It catalyses the reaction orotidine 5'-phosphate + diphosphate = orotate + 5-phospho-alpha-D-ribose 1-diphosphate. It participates in pyrimidine metabolism; UMP biosynthesis via de novo pathway; UMP from orotate: step 1/2. Its function is as follows. Catalyzes the transfer of a ribosyl phosphate group from 5-phosphoribose 1-diphosphate to orotate, leading to the formation of orotidine monophosphate (OMP). This Chlorobium phaeobacteroides (strain BS1) protein is Orotate phosphoribosyltransferase.